Consider the following 875-residue polypeptide: Alanine--tRNA ligase (875 aa).

Residues His-564, His-568, Cys-666, and His-670 each coordinate Zn(2+).

The protein belongs to the class-II aminoacyl-tRNA synthetase family. As to quaternary structure, homotetramer. The cofactor is Zn(2+).

Its subcellular location is the cytoplasm. The catalysed reaction is tRNA(Ala) + L-alanine + ATP = L-alanyl-tRNA(Ala) + AMP + diphosphate. Its function is as follows. Catalyzes the attachment of alanine to tRNA(Ala) in a two-step reaction: alanine is first activated by ATP to form Ala-AMP and then transferred to the acceptor end of tRNA(Ala). Also edits incorrectly charged Ser-tRNA(Ala) and Gly-tRNA(Ala) via its editing domain. In Pectobacterium atrosepticum (strain SCRI 1043 / ATCC BAA-672) (Erwinia carotovora subsp. atroseptica), this protein is Alanine--tRNA ligase.